Consider the following 478-residue polypeptide: D(1B) dopamine receptor (478 aa).

Residues 1 to 38 (MLPPGRNGTAHRARLGLQRQLAQVDAPGGSAAPLGPAQ) are Extracellular-facing. An N-linked (GlcNAc...) asparagine glycan is attached at asparagine 7. The helical transmembrane segment at 39 to 64 (VVTAGLLTLLIVWTLLGNVLVCAAIV) threads the bilayer. Residues 65–75 (RSRHLRAKMTN) lie on the Cytoplasmic side of the membrane. Residues 76–102 (IFIVSLAVSDLFVALLVMPWKAVAEVA) form a helical membrane-spanning segment. Topologically, residues 103 to 111 (GYWPFGAFC) are extracellular. A disulfide bridge connects residues cysteine 111 and cysteine 211. Residues 112-134 (DIWVAFDIMCSTASILNLCIISV) form a helical membrane-spanning segment. Topologically, residues 135-153 (DRYWAISRPFRYERKMTQR) are cytoplasmic. Residues 154 to 179 (VALVMVALAWTLSILISFIPVQLNWH) form a helical membrane-spanning segment. Over 180 to 215 (RDKAGSQGREGLLSNETPWEEGWELDGRTENCDSSL) the chain is Extracellular. A helical transmembrane segment spans residues 216–240 (NRTYAISSSLISFYIPVAIMIVTYT). Residues 241 to 289 (RIYRIAQVQIRRISSLERAAEHAQSCRSRGACEPDPSLRASIKKETKVF) lie on the Cytoplasmic side of the membrane. The helical transmembrane segment at 290–317 (KTLSVIMGVFVCCWLPFFILNCMVPFCS) threads the bilayer. Residues 318-335 (SGDAQGPRTGFPCVSETT) lie on the Extracellular side of the membrane. Residues 336–357 (FDIFVWFGWANSSLNPIIYAFN) form a helical membrane-spanning segment. Residues 358 to 478 (ADFRKVFAQL…LTPNCFHKTA (121 aa)) are Cytoplasmic-facing. Cysteine 370 is lipidated: S-palmitoyl cysteine. The disordered stretch occupies residues 416-446 (GDREVGEEEEAEEEGPFDHMSQISPTTPDGD). Over residues 420–430 (VGEEEEAEEEG) the composition is skewed to acidic residues.

It belongs to the G-protein coupled receptor 1 family.

The protein localises to the cell membrane. Functionally, dopamine receptor whose activity is mediated by G proteins which activate adenylyl cyclase. In Mus musculus (Mouse), this protein is D(1B) dopamine receptor (Drd5).